We begin with the raw amino-acid sequence, 535 residues long: Probable fucosyltransferase 4 (535 aa).

Topologically, residues 1 to 20 (MYHIFQISGEVIKGLGLKTK) are cytoplasmic. A helical; Signal-anchor for type II membrane protein membrane pass occupies residues 21 to 41 (ILITIVFSTLLILSVMLLSFS). The Lumenal segment spans residues 42–535 (NNFNNKLFAA…IWGLKLFDEL (494 aa)). Asparagine 136, asparagine 226, asparagine 230, asparagine 377, and asparagine 409 each carry an N-linked (GlcNAc...) asparagine glycan.

The protein belongs to the glycosyltransferase 37 family. Expressed in roots, stems, leaves, flowers, siliques and seedlings.

The protein resides in the golgi apparatus. It is found in the golgi stack membrane. Its pathway is protein modification; protein glycosylation. Functionally, may be involved in cell wall biosynthesis. May act as a fucosyltransferase. This is Probable fucosyltransferase 4 (FUT4) from Arabidopsis thaliana (Mouse-ear cress).